The chain runs to 396 residues: S-adenosylmethionine synthase (396 aa).

Residue His16 participates in ATP binding. A Mg(2+)-binding site is contributed by Asp18. Residue Glu44 coordinates K(+). Glu57 and Gln100 together coordinate L-methionine. Residues 100-110 (QSVDIAQGVDR) are flexible loop. ATP-binding positions include 165 to 167 (DAK), Asp240, 246 to 247 (RK), Ala263, and Lys267. Asp240 lines the L-methionine pocket. Lys271 is a binding site for L-methionine.

This sequence belongs to the AdoMet synthase family. As to quaternary structure, homotetramer; dimer of dimers. The cofactor is Mg(2+). It depends on K(+) as a cofactor.

It is found in the cytoplasm. It catalyses the reaction L-methionine + ATP + H2O = S-adenosyl-L-methionine + phosphate + diphosphate. Its pathway is amino-acid biosynthesis; S-adenosyl-L-methionine biosynthesis; S-adenosyl-L-methionine from L-methionine: step 1/1. Its function is as follows. Catalyzes the formation of S-adenosylmethionine (AdoMet) from methionine and ATP. The overall synthetic reaction is composed of two sequential steps, AdoMet formation and the subsequent tripolyphosphate hydrolysis which occurs prior to release of AdoMet from the enzyme. The chain is S-adenosylmethionine synthase from Pseudomonas entomophila (strain L48).